The following is a 254-amino-acid chain: Diphthine synthase (254 aa).

S-adenosyl-L-methionine contacts are provided by residues Asp-83, Leu-86, 111–112 (SI), Leu-163, and Val-205.

The protein belongs to the diphthine synthase family. In terms of assembly, homodimer.

It carries out the reaction 2-[(3S)-amino-3-carboxypropyl]-L-histidyl-[translation elongation factor 2] + 3 S-adenosyl-L-methionine = diphthine-[translation elongation factor 2] + 3 S-adenosyl-L-homocysteine + 3 H(+). It participates in protein modification; peptidyl-diphthamide biosynthesis. Its function is as follows. S-adenosyl-L-methionine-dependent methyltransferase that catalyzes the trimethylation of the amino group of the modified target histidine residue in translation elongation factor 2 (EF-2), to form an intermediate called diphthine. The three successive methylation reactions represent the second step of diphthamide biosynthesis. The polypeptide is Diphthine synthase (Pyrobaculum aerophilum (strain ATCC 51768 / DSM 7523 / JCM 9630 / CIP 104966 / NBRC 100827 / IM2)).